Reading from the N-terminus, the 154-residue chain is Protein X (154 aa).

Residues 68 to 117 (PCALRFTSARRMETTVNAHQILPKVLHKRTLGLSAMSTTDLEAYFKDCLF) are mitochondrial targeting sequence.

This sequence belongs to the orthohepadnavirus protein X family. In terms of assembly, may form homodimer. May interact with host CEBPA, CFLAR, CREB1, DDB1, E4F1, HBXIP, HSPD1/HSP60, NFKBIA, POLR2E and SMAD4. Interacts with host SMC5-SMC6 complex and induces its degradation. Interacts with host TRPC4AP; leading to prevent ubiquitination of TRPC4AP. Interacts with host PLSCR1; this interaction promotes ubiquitination and degradation of HBx and impairs HBx-mediated cell proliferation. Post-translationally, a fraction may be phosphorylated in insect cells and HepG2 cells, a human hepatoblastoma cell line. Phosphorylated in vitro by host protein kinase C or mitogen-activated protein kinase. N-acetylated in insect cells.

The protein resides in the host cytoplasm. It is found in the host nucleus. It localises to the host mitochondrion. Its function is as follows. Multifunctional protein that plays a role in silencing host antiviral defenses and promoting viral transcription. Does not seem to be essential for HBV infection. May be directly involved in development of cirrhosis and liver cancer (hepatocellular carcinoma). Most of cytosolic activities involve modulation of cytosolic calcium. The effect on apoptosis is controversial depending on the cell types in which the studies have been conducted. May induce apoptosis by localizing in mitochondria and causing loss of mitochondrial membrane potential. May also modulate apoptosis by binding host CFLAR, a key regulator of the death-inducing signaling complex (DISC). Promotes viral transcription by using the host E3 ubiquitin ligase DDB1 to target the SMC5-SMC6 complex to proteasomal degradation. This host complex would otherwise bind to viral episomal DNA, and prevents its transcription. Moderately stimulates transcription of many different viral and cellular transcription elements. Promoters and enhancers stimulated by HBx contain DNA binding sites for NF-kappa-B, AP-1, AP-2, c-EBP, ATF/CREB, or the calcium-activated factor NF-AT. In Hepatitis B virus genotype E (isolate Cote d'Ivoire/ABI-212/2003) (HBV-E), this protein is Protein X.